Consider the following 120-residue polypeptide: uncharacterized protein (120 aa).

This is an uncharacterized protein from Acanthamoeba polyphaga mimivirus (APMV).